We begin with the raw amino-acid sequence, 301 residues long: Protoheme IX farnesyltransferase 1 (301 aa).

A run of 9 helical transmembrane segments spans residues 29–49 (VVALMLLTVLVGMCLAVPTAV), 51–71 (VQPLIAGMFGIALMAGSAAAL), 101–121 (ALIFAASIGGLGFVVLYVLVN), 123–143 (LTAWLTFASLIGYALVYTAYL), 150–170 (NIVIGGLAGAMPPLLGWTAVT), 177–197 (ALLLVIIIFTWTPPHFWALAI), 223–243 (CILLYTVLLAIACLLPVLVGM), 244–264 (CGPMYFVCSSLLSSVFIYKAW), and 281–301 (FSIYHLMLLFMALLIDHYLWS).

Belongs to the UbiA prenyltransferase family. Protoheme IX farnesyltransferase subfamily.

It is found in the cell inner membrane. The enzyme catalyses heme b + (2E,6E)-farnesyl diphosphate + H2O = Fe(II)-heme o + diphosphate. The protein operates within porphyrin-containing compound metabolism; heme O biosynthesis; heme O from protoheme: step 1/1. In terms of biological role, converts heme B (protoheme IX) to heme O by substitution of the vinyl group on carbon 2 of heme B porphyrin ring with a hydroxyethyl farnesyl side group. This is Protoheme IX farnesyltransferase 1 from Shewanella putrefaciens (strain CN-32 / ATCC BAA-453).